Here is a 100-residue protein sequence, read N- to C-terminus: Urease subunit gamma (100 aa).

Belongs to the urease gamma subunit family. Heterotrimer of UreA (gamma), UreB (beta) and UreC (alpha) subunits. Three heterotrimers associate to form the active enzyme.

The protein resides in the cytoplasm. It catalyses the reaction urea + 2 H2O + H(+) = hydrogencarbonate + 2 NH4(+). The protein operates within nitrogen metabolism; urea degradation; CO(2) and NH(3) from urea (urease route): step 1/1. This chain is Urease subunit gamma, found in Bordetella pertussis (strain Tohama I / ATCC BAA-589 / NCTC 13251).